The following is a 706-amino-acid chain: Lethal(3)malignant brain tumor-like protein 2 (706 aa).

Residues 1–85 are disordered; the sequence is MEKPRGVEET…GTPRSLDGSG (85 aa). Residue serine 13 is modified to Phosphoserine. A compositionally biased stretch (acidic residues) spans 15 to 26; that stretch reads PMEEEEEDDDLE. The span at 39–50 shows a compositional bias: low complexity; the sequence is SSAGSESSSYLE. Basic and acidic residues predominate over residues 54–63; sequence EAEHEDREAG. Serine 68 carries the post-translational modification Phosphoserine. Threonine 77 is subject to Phosphothreonine. The segment at 82-117 adopts an FCS-type zinc-finger fold; the sequence is DGSGSEPAVCEMCGIVGTREAFFSKTKRFCSVSCSR. Positions 91, 94, 111, and 115 each coordinate Zn(2+). MBT repeat units lie at residues 180–284, 292–392, 398–501, and 509–605; these read FDWG…LVPP, TDWK…IKLS, MAHH…LTPP, and FSWE…LQPP. Phosphoserine is present on serine 339. Lysine 406 participates in a covalent cross-link: Glycyl lysine isopeptide (Lys-Gly) (interchain with G-Cter in SUMO2). A disordered region spans residues 606–669; it reads VATEPTTPLK…KAPSEPAPDE (64 aa). The segment covering 620–635 has biased composition (basic residues); sequence TKKKKKQFGKKRKRIP. Glycyl lysine isopeptide (Lys-Gly) (interchain with G-Cter in SUMO2) cross-links involve residues lysine 648, lysine 660, and lysine 676. Positions 685 to 706 are disordered; the sequence is ADKALSPELPVPVENIKQETDD. Phosphoserine is present on serine 690. A Glycyl lysine isopeptide (Lys-Gly) (interchain with G-Cter in SUMO1); alternate cross-link involves residue lysine 701. A Glycyl lysine isopeptide (Lys-Gly) (interchain with G-Cter in SUMO2); alternate cross-link involves residue lysine 701.

Part of the E2F6.com-1 complex in G0 phase composed of E2F6, MGA, MAX, TFDP1, CBX3, BAT8, EUHMTASE1, RING1, RNF2, MBLR, BAT8 and YAF2.

It localises to the nucleus. Putative Polycomb group (PcG) protein. PcG proteins maintain the transcriptionally repressive state of genes, probably via a modification of chromatin, rendering it heritably changed in its expressibility. Its association with a chromatin-remodeling complex suggests that it may contribute to prevent expression of genes that trigger the cell into mitosis. Binds to monomethylated and dimethylated 'Lys-20' on histone H4. Binds histone H3 peptides that are monomethylated or dimethylated on 'Lys-4', 'Lys-9' or 'Lys-27'. This Bos taurus (Bovine) protein is Lethal(3)malignant brain tumor-like protein 2 (L3MBTL2).